The chain runs to 573 residues: MSHAAEPAQDGVEASAEGPRAVFLLLEDRRPADSAQLLSLNSLLPESGIVADIELENVLDPDSFYELKSPPLSLRSSLPISLQATPATPATLSASSSAEGSRTPAMSSSSSSRVLLRQQLMRAQAQEQERRERREQASSFPSPAPASPAISVVGVSAGGHTLGRPPPAQVPREVLKVQTHLENPTRYHLQQARRQQVKQYLSTTLGPKLASQALTPPPGGASVQPLPTPEAAHAPGPTSSAPNSPMALLTIGSSSEKEIDDVIDEIISLESSYNDEMLSYLPGGNTGLQLPSTLPVSGNLLDVYNNQGVATPAITVSNSCPAELPNIKREISETEAKALLKERQKKDNHNLIERRRRFNINDRIKELGTLIPKSSDPEMRWNKGTILKASVDYIRKLQKEQQRSKDLESRQRSLEQANRSLQLRIQELELQAQIHGLPVPPTPGLLSLAATSASDSLKPEQLDVEEEGRPGTAIFHATGGLAQSAPHQQPPPPPSDALLDLHFPSDHLGDLGDPFHLGLEDILMEEEEGVVGGLSGGTLSPLRAASDPLLSSVSPAVSKASSRRSSFSMEEES.

Phosphoserine; by MTOR is present on serine 47. A disordered region spans residues 91 to 151; sequence TLSASSSAEG…SPAPASPAIS (61 aa). Over residues 107–126 the composition is skewed to low complexity; it reads SSSSSSRVLLRQQLMRAQAQ. Positions 127-136 are enriched in basic and acidic residues; it reads EQERRERREQ. Residues 137-151 show a composition bias toward low complexity; it reads ASSFPSPAPASPAIS. Asymmetric dimethylarginine is present on arginine 186. The interval 209–248 is disordered; sequence LASQALTPPPGGASVQPLPTPEAAHAPGPTSSAPNSPMAL. The strong transcription activation domain stretch occupies residues 258–269; it reads EIDDVIDEIISL. Serine 319 is modified (phosphoserine; by MTOR). Lysine 337 participates in a covalent cross-link: Glycyl lysine isopeptide (Lys-Gly) (interchain with G-Cter in SUMO2). The 54-residue stretch at 344–397 folds into the bHLH domain; the sequence is QKKDNHNLIERRRRFNINDRIKELGTLIPKSSDPEMRWNKGTILKASVDYIRKL. The Nuclear localization signal motif lies at 354-357; sequence RRRR. The interval 407-428 is leucine-zipper; it reads LESRQRSLEQANRSLQLRIQEL. A disordered region spans residues 531–573; it reads VGGLSGGTLSPLRAASDPLLSSVSPAVSKASSRRSSFSMEEES. Over residues 537–573 the composition is skewed to low complexity; that stretch reads GTLSPLRAASDPLLSSVSPAVSKASSRRSSFSMEEES. 6 positions are modified to phosphoserine: serine 540, serine 546, serine 552, serine 554, serine 558, and serine 566.

It belongs to the MiT/TFE family. In terms of assembly, homodimer and heterodimer; with TFEB or MITF. Interacts with RRAGC/RagC GDP-bound and RRAGD/RagD GDP-bound; promoting its recruitment to lysosomal membrane in the presence of nutrients. Post-translationally, phosphorylation ar Ser-47 and Ser-319 by MTOR via non-canonical mTORC1 pathway regulates its stability and subcellular location, respectively. When nutrients are present, phosphorylation by MTOR at Ser-47 promotes ubiquitination by the SCF(BTRC) complex, followed by degradation. When nutrients are present, phosphorylation by MTOR at Ser-319 also promotes association with 14-3-3/YWHA adapters and retention in the cytosol. Phosphorylation at Ser-47 plays a more critical role than phosphorylation at Ser-319 for TFE3 inactivation. Inhibition of mTORC1, starvation and lysosomal disruption, promotes dephosphorylation and transcription factor activity. In terms of processing, ubiquitinated by the SCF(BTRC) and SCF(FBXW11) complexes following phosphorylation at Ser-47 by MTOR, leading to its degradation by the proteasome. Sumoylated; does not affect dimerization with MITF.

It is found in the cytoplasm. The protein resides in the cytosol. Its subcellular location is the nucleus. It localises to the lysosome membrane. In terms of biological role, transcription factor that acts as a master regulator of lysosomal biogenesis and immune response. Specifically recognizes and binds E-box sequences (5'-CANNTG-3'); efficient DNA-binding requires dimerization with itself or with another MiT/TFE family member such as TFEB or MITF. Involved in the cellular response to amino acid availability by acting downstream of MTOR: in the presence of nutrients, TFE3 phosphorylation by MTOR promotes its inactivation. Upon starvation or lysosomal stress, inhibition of MTOR induces TFE3 dephosphorylation, resulting in transcription factor activity. Specifically recognizes and binds the CLEAR-box sequence (5'-GTCACGTGAC-3') present in the regulatory region of many lysosomal genes, leading to activate their expression, thereby playing a central role in expression of lysosomal genes. Maintains the pluripotent state of embryonic stem cells by promoting the expression of genes such as ESRRB; mTOR-dependent TFE3 cytosolic retention and inactivation promotes exit from pluripotency. Required to maintain the naive pluripotent state of hematopoietic stem cell; mTOR-dependent cytoplasmic retention of TFE3 promotes the exit of hematopoietic stem cell from pluripotency. TFE3 activity is also involved in the inhibition of neuronal progenitor differentiation. Acts as a positive regulator of browning of adipose tissue by promoting expression of target genes; mTOR-dependent phosphorylation promotes cytoplasmic retention of TFE3 and inhibits browning of adipose tissue. In association with TFEB, activates the expression of CD40L in T-cells, thereby playing a role in T-cell-dependent antibody responses in activated CD4(+) T-cells and thymus-dependent humoral immunity. Specifically recognizes the MUE3 box, a subset of E-boxes, present in the immunoglobulin enhancer. It also binds very well to a USF/MLTF site. May regulate lysosomal positioning in response to nutrient deprivation by promoting the expression of PIP4P1. This chain is Transcription factor E3, found in Bos taurus (Bovine).